The primary structure comprises 78 residues: MSRVCQVTGKRPVTGNNRSHALNATKRRFLPNLHSHRFWVESEKRFVTLRVSAKGMRVIDKKGIDTVLAELRARSEKY.

This sequence belongs to the bacterial ribosomal protein bL28 family.

This is Large ribosomal subunit protein bL28 from Shigella boydii serotype 4 (strain Sb227).